The primary structure comprises 388 residues: Processive diacylglycerol beta-glucosyltransferase (388 aa).

The protein belongs to the glycosyltransferase 28 family. UgtP subfamily.

It localises to the cell membrane. It carries out the reaction a 1,2-diacyl-3-O-(beta-D-glucopyranosyl)-sn-glycerol + UDP-alpha-D-glucose = a 1,2-diacyl-3-O-(beta-D-Glc-(1-&gt;6)-beta-D-Glc)-sn-glycerol + UDP + H(+). It catalyses the reaction a 1,2-diacyl-3-O-(beta-D-Glc-(1-&gt;6)-beta-D-Glc)-sn-glycerol + UDP-alpha-D-glucose = a 1,2-diacyl-3-O-(beta-D-Glc-(1-&gt;6)-beta-D-Glc-(1-&gt;6)-beta-D-Glc)-sn-glycerol + UDP + H(+). The catalysed reaction is a 1,2-diacyl-sn-glycerol + UDP-alpha-D-glucose = a 1,2-diacyl-3-O-(beta-D-glucopyranosyl)-sn-glycerol + UDP + H(+). Its pathway is glycolipid metabolism; diglucosyl-diacylglycerol biosynthesis. Its function is as follows. Processive glucosyltransferase involved in the biosynthesis of both the bilayer- and non-bilayer-forming membrane glucolipids. Is able to successively transfer up to three glucosyl residues to diacylglycerol (DAG), thereby catalyzing the formation of beta-monoglucosyl-DAG (3-O-(beta-D-glucopyranosyl)-1,2-diacyl-sn-glycerol), beta-diglucosyl-DAG (3-O-(beta-D-glucopyranosyl-beta-(1-&gt;6)-D-glucopyranosyl)-1,2-diacyl-sn-glycerol) and beta-triglucosyl-DAG (3-O-(beta-D-glucopyranosyl-beta-(1-&gt;6)-D-glucopyranosyl-beta-(1-&gt;6)-D-glucopyranosyl)-1,2-diacyl-sn-glycerol). Beta-diglucosyl-DAG is the predominant glycolipid found in Bacillales and is also used as a membrane anchor for lipoteichoic acid (LTA). The chain is Processive diacylglycerol beta-glucosyltransferase from Bacillus anthracis (strain A0248).